The sequence spans 394 residues: Isopentenyl-diphosphate delta-isomerase (394 aa).

10-11 contacts substrate; that stretch reads RK. Residues Thr-67, 68–70, Ser-101, and Asn-129 each bind FMN; that span reads GMT. 101–103 is a substrate binding site; that stretch reads SQR. Gln-168 is a substrate binding site. Glu-169 serves as a coordination point for Mg(2+). FMN is bound by residues Lys-200, Ser-225, Thr-230, 279-281, and 300-301; these read GMR and AL.

It belongs to the IPP isomerase type 2 family. As to quaternary structure, homooctamer. Dimer of tetramers. FMN is required as a cofactor. The cofactor is NADPH. Mg(2+) serves as cofactor.

Its subcellular location is the cytoplasm. The enzyme catalyses isopentenyl diphosphate = dimethylallyl diphosphate. Involved in the biosynthesis of isoprenoids. Catalyzes the 1,3-allylic rearrangement of the homoallylic substrate isopentenyl (IPP) to its allylic isomer, dimethylallyl diphosphate (DMAPP). The sequence is that of Isopentenyl-diphosphate delta-isomerase from Pyrococcus furiosus (strain ATCC 43587 / DSM 3638 / JCM 8422 / Vc1).